The chain runs to 139 residues: ATP synthase epsilon chain 2 (139 aa).

Belongs to the ATPase epsilon chain family. F-type ATPases have 2 components, CF(1) - the catalytic core - and CF(0) - the membrane proton channel. CF(1) has five subunits: alpha(3), beta(3), gamma(1), delta(1), epsilon(1). CF(0) has three main subunits: a, b and c.

Its subcellular location is the cell inner membrane. Its function is as follows. Produces ATP from ADP in the presence of a proton gradient across the membrane. This Paraburkholderia xenovorans (strain LB400) protein is ATP synthase epsilon chain 2.